The following is a 716-amino-acid chain: MSTVVVKGNVNGGVQQPRMRRRQSLRRRANRVQPVVMVTAPGQPRRRRRRRGGNRRSRRTGVPRGRGSSETFVFTKDNLVGNTQGSFTFGPSLSDCPAFKDGILKAYHEYKITSILLQFVSEASSTSSGSIAYELDPHCKVSSLQSYVNKFQITKGGAKTYQARMINGVEWHDSSEDQCRILWKGNGKSSDSAGSFRVTIKVALQNPKYDSGSEPSPSPQPTPTPTPQKHERFIAYVGIPMLTIQARENDDQIILGSLGSQRMKYIEDENQNYTKFSSEYYSQSSMQAVPMYYFNVPKGQWSVDISCEGYQPTSSTSDPNRGRSDGMIAYSNADSDYWNVGEADGVKISKLRNDNTYRQGHPELEINSCHFREGQLLERDATISFHVEAPTDGRFFLVGPAIQKTAKYNYTISYGDWTDRDMELGLITVVLDEHLEGTGSANRVRRPPREGHTYMASPHEPEGKPVGNKPRDETPIQTQERQPDQTPSDDVSDAGSVNSGGPTESLRLEFGVNSDSTYDATVDGTDWPRIPPPRHPPEPRVSGNSRTVTDFSSKADLLENWDAEHFDPGYSKEDVAAATIIAHGSIQDGRSMLEKREENVKNKTSSWKPPSLKAVSPAIAKLRSIRKSQPLEGGTLNKDATDGVSSIGSGSLTGGTLKRKATIEERLLQTLTTEQRLWYENFKKTNPPAATQWLFEYQPPPQVDRNIAEKPFQGRK.

Low complexity predominate over residues 1 to 17; the sequence is MSTVVVKGNVNGGVQQP. Disordered stretches follow at residues 1 to 68, 207 to 228, 438 to 547, and 630 to 655; these read MSTV…GRGS, PKYD…PTPQ, TGSA…NSRT, and PLEG…LTGG. Basic residues-rich tracts occupy residues 18–30 and 44–61; these read RMRR…RRAN and PRRR…RRTG. The interval 210–716 is readthrough domain (RTD); the sequence is DSGSEPSPSP…IAEKPFQGRK (507 aa). Residues 216-226 show a composition bias toward pro residues; the sequence is SPSPQPTPTPT. A compositionally biased stretch (basic and acidic residues) spans 459-474; sequence HEPEGKPVGNKPRDET. Residues 475–502 are compositionally biased toward polar residues; the sequence is PIQTQERQPDQTPSDDVSDAGSVNSGGP. Residues 645 to 655 are compositionally biased toward low complexity; the sequence is SSIGSGSLTGG. The tract at residues 694–698 is involved in the efficient long distance movement of the virus and the periplasmic subcellular location; that stretch reads LFEYQ.

It belongs to the luteoviruses readthrough protein family. In virus particles, more than 200 amino acids are proteolytically cleaved releasing the C-terminus part of the RTD domain. The cleaved product remains attached to the virus particle.

Its subcellular location is the virion. The protein resides in the host cell junction. It is found in the host plasmodesma. The protein localises to the host periplasm. Minor component of the viral capsid involved in aphid transmission and virus accumulation in the host. Required for the virus to move through the aphid. The RTD domain of the protein is exposed on the surface of the particle and determines the vector specificity and intestinal tropism in the aphid. This domain might also determine the limitation of the virus to the host phloem. In terms of biological role, participates, together with the proteins P0 and P1, in the inhibition of the induction of aphid-induced host phytohormones. This could play a role in the attraction to the infected plants by aphids. In Solanum tuberosum (Potato), this protein is Readthrough protein P3-RTD.